Consider the following 321-residue polypeptide: MPFITEIKTFAALGSGVIGSGWVARALAHGLDVVAWDPAPGAEQALRKRVANAWPALEKQGLAPGASQDRLKFVATIEECVRNADFIQESAPERLDLKLDLHAKISAAAKPDAIIGSSTSGLLPSEFYESSTHPERCVVGHPFNPVYLLPLVEIVGGSRTSPEAIEAAKTIYTALGMRPLHVRKEVPGFIADRLLEALWREALHLVNDGVATTGEIDDAIRFGAGLRWSFMGTFLTYTLAGGDAGMRHFMSQFGPALKLPWTYLPAPELTDKLIDDVVSGTSEQQGERSIAALERYRDDTLLAVLEAVKSSKASHGLSFSD.

14 to 19 (GSGVIG) contributes to the NAD(+) binding site.

Belongs to the 3-hydroxyacyl-CoA dehydrogenase family. L-carnitine dehydrogenase subfamily. In terms of assembly, homodimer.

The protein resides in the cytoplasm. The enzyme catalyses carnitine + NAD(+) = 3-dehydrocarnitine + NADH + H(+). It participates in amine and polyamine metabolism; carnitine metabolism. In terms of biological role, catalyzes the NAD(+)-dependent oxidation of L-carnitine to 3-dehydrocarnitine. This is L-carnitine dehydrogenase from Pseudomonas putida (strain ATCC 47054 / DSM 6125 / CFBP 8728 / NCIMB 11950 / KT2440).